The sequence spans 424 residues: CinA-like protein (424 aa).

Belongs to the CinA family.

In Shewanella amazonensis (strain ATCC BAA-1098 / SB2B), this protein is CinA-like protein.